The sequence spans 412 residues: Polyferredoxin protein MvhB (412 aa).

4Fe-4S ferredoxin-type domains are found at residues 1–29 (MIVVNKEDCIRCGACQGTCPTAAIEVTPE), 30–57 (DVIYCDICGGEPKCVDACPTGALKIEDL), 67–96 (GRIVFNPDKCNECGDCVEVCPPQILKLDEG), 97–127 (KVKKIPLQGFCVMCQKCVDICPVGVIGVEGI), 138–166 (EGPIFIADCVGCGMCVPECPVDAITLEKV), 168–197 (GVIEIDEDTCIKCGVCAQTCPWNAVYISGK), 207–236 (RKFELDEEACIGCNTCVEACPGDFIVPKSS), 238–266 (LTVELPAICTACGLCEQLCPVDAIDLDVE), 276–305 (EGLVWDEGKCDFIGACANICPNDAIRVVTR), 314–345 (EKVDEEPSFAMCTRCGACTMACPKGALSLVDM), 357–386 (KRVQYNPALCDQCGDCIEACPYDMLKLTDE), and 385–412 (DEKVPLKGFCILCDQCIPACPKGALSLK). C9, C12, C15, and C19 together coordinate [4Fe-4S] cluster. [4Fe-4S] cluster is bound by residues C76, C79, C82, C86, C107, C110, C113, C117, C146, C149, C152, C156, C177, C180, C183, C187, C216, C219, C222, C226, C246, C249, C252, and C256. [4Fe-4S] cluster contacts are provided by C325, C328, C331, C335, C366, C369, C372, C376, C394, C397, C400, and C404.

[4Fe-4S] cluster serves as cofactor.

The protein is Polyferredoxin protein MvhB (mvhB) of Methanothermobacter marburgensis (strain ATCC BAA-927 / DSM 2133 / JCM 14651 / NBRC 100331 / OCM 82 / Marburg) (Methanobacterium thermoautotrophicum).